A 141-amino-acid chain; its full sequence is Hemoglobin subunit alpha-D (141 aa).

The region spanning 1–141 (MLTADDKKIL…VAAVLAEKYR (141 aa)) is the Globin domain. The heme b site is built by histidine 58 and histidine 87.

It belongs to the globin family. Heterotetramer of two alpha-D chains and two beta chains. As to expression, red blood cells.

Its function is as follows. Involved in oxygen transport from the lung to the various peripheral tissues. The sequence is that of Hemoglobin subunit alpha-D (HBAD) from Branta canadensis (Canada goose).